The primary structure comprises 320 residues: Cytochrome f (320 aa).

Positions 1–32 are cleaved as a signal peptide; sequence MKTKKSYDKVTRWVTPPILMLIIIHIITGACS. Residues Y36, C56, C59, and H60 each contribute to the heme site. A helical membrane pass occupies residues 286–306; it reads IQGLLGFLASVVLAQIFLVLK.

It belongs to the cytochrome f family. In terms of assembly, the 4 large subunits of the cytochrome b6-f complex are cytochrome b6, subunit IV (17 kDa polypeptide, petD), cytochrome f and the Rieske protein, while the 4 small subunits are PetG, PetL, PetM and PetN. The complex functions as a dimer. The cofactor is heme.

It is found in the plastid. Its subcellular location is the chloroplast thylakoid membrane. Functionally, component of the cytochrome b6-f complex, which mediates electron transfer between photosystem II (PSII) and photosystem I (PSI), cyclic electron flow around PSI, and state transitions. In Gnetum parvifolium (Small-leaved jointfir), this protein is Cytochrome f.